Reading from the N-terminus, the 109-residue chain is Large ribosomal subunit protein uL24 (109 aa).

Residues K85–Q109 are disordered.

This sequence belongs to the universal ribosomal protein uL24 family. Part of the 50S ribosomal subunit.

Its function is as follows. One of two assembly initiator proteins, it binds directly to the 5'-end of the 23S rRNA, where it nucleates assembly of the 50S subunit. Functionally, one of the proteins that surrounds the polypeptide exit tunnel on the outside of the subunit. The chain is Large ribosomal subunit protein uL24 from Mycoplasmoides gallisepticum (strain R(low / passage 15 / clone 2)) (Mycoplasma gallisepticum).